The following is a 196-amino-acid chain: 3-isopropylmalate dehydratase small subunit (196 aa).

This sequence belongs to the LeuD family. LeuD type 1 subfamily. As to quaternary structure, heterodimer of LeuC and LeuD.

It catalyses the reaction (2R,3S)-3-isopropylmalate = (2S)-2-isopropylmalate. The protein operates within amino-acid biosynthesis; L-leucine biosynthesis; L-leucine from 3-methyl-2-oxobutanoate: step 2/4. Its function is as follows. Catalyzes the isomerization between 2-isopropylmalate and 3-isopropylmalate, via the formation of 2-isopropylmaleate. This chain is 3-isopropylmalate dehydratase small subunit, found in Corynebacterium diphtheriae (strain ATCC 700971 / NCTC 13129 / Biotype gravis).